Consider the following 129-residue polypeptide: Antileukoproteinase (129 aa).

The N-terminal stretch at 1–22 (GRGLLPFVLLALGIXAPWAVEG) is a signal peptide. 2 consecutive WAP domains span residues 25–73 (NALK…LNPV) and 79–127 (VKVK…LTPV). Intrachain disulfides connect C32-C61, C40-C65, C48-C60, C54-C69, C86-C115, C93-C119, C102-C114, and C108-C123. Residues 81 to 129 (VKPGKCPVVYGQCMMLNPPNHCKTDSQCLGDLKCCKSMCGKVCLTPVKA) are elastase inhibitory domain.

As to quaternary structure, interacts with GRN; interaction protects progranulin from proteolysis. Found in pregnant endometrium and myometrium, placenta, allantoic fluids, fetal cord blood, and fetal liver. Also found in uterus and lung.

It localises to the secreted. Acid-stable proteinase inhibitor with strong affinities for trypsin, chymotrypsin, elastase, and cathepsin G. Modulates the inflammatory and immune responses after bacterial infection, and after infection by the intracellular parasite L.major. Down-regulates responses to bacterial lipopolysaccharide (LPS). Plays a role in regulating the activation of NF-kappa-B and inflammatory responses. Has antimicrobial activity against mycobacteria, but not against salmonella. Contributes to normal resistance against infection by M.tuberculosis. Required for normal resistance to infection by L.major. Required for normal wound healing, probably by preventing tissue damage by limiting protease activity. Together with ELANE, required for normal differentiation and proliferation of bone marrow myeloid cells. The protein is Antileukoproteinase (SLPI) of Sus scrofa (Pig).